The primary structure comprises 138 residues: Large ribosomal subunit protein uL16 (138 aa).

Basic residues predominate over residues 1–13 (MLQPSRRKYRKEQ). Positions 1–20 (MLQPSRRKYRKEQKGRNTGL) are disordered.

It belongs to the universal ribosomal protein uL16 family. Part of the 50S ribosomal subunit.

Functionally, binds 23S rRNA and is also seen to make contacts with the A and possibly P site tRNAs. The protein is Large ribosomal subunit protein uL16 of Bordetella avium (strain 197N).